Here is a 247-residue protein sequence, read N- to C-terminus: 23S rRNA (guanosine-2'-O-)-methyltransferase RlmB (247 aa).

3 residues coordinate S-adenosyl-L-methionine: glycine 197, isoleucine 217, and leucine 226.

This sequence belongs to the class IV-like SAM-binding methyltransferase superfamily. RNA methyltransferase TrmH family. RlmB subfamily.

It is found in the cytoplasm. The enzyme catalyses guanosine(2251) in 23S rRNA + S-adenosyl-L-methionine = 2'-O-methylguanosine(2251) in 23S rRNA + S-adenosyl-L-homocysteine + H(+). Specifically methylates the ribose of guanosine 2251 in 23S rRNA. The polypeptide is 23S rRNA (guanosine-2'-O-)-methyltransferase RlmB (Vibrio vulnificus (strain CMCP6)).